Consider the following 615-residue polypeptide: DNA mismatch repair protein MutL (615 aa).

The interval 362–397 (HFAEPAVREPVAPRYSPAPASGGRPAASWPNAQPGY) is disordered. The segment covering 378–391 (PAPASGGRPAASWP) has biased composition (low complexity).

This sequence belongs to the DNA mismatch repair MutL/HexB family.

Its function is as follows. This protein is involved in the repair of mismatches in DNA. It is required for dam-dependent methyl-directed DNA mismatch repair. May act as a 'molecular matchmaker', a protein that promotes the formation of a stable complex between two or more DNA-binding proteins in an ATP-dependent manner without itself being part of a final effector complex. This is DNA mismatch repair protein MutL from Escherichia fergusonii (strain ATCC 35469 / DSM 13698 / CCUG 18766 / IAM 14443 / JCM 21226 / LMG 7866 / NBRC 102419 / NCTC 12128 / CDC 0568-73).